An 875-amino-acid chain; its full sequence is DNA topoisomerase 3-beta (875 aa).

One can recognise a Toprim domain in the interval 3–153; sequence SVLMVAEKPS…QVTYRAHFSA (151 aa). The region spanning 170 to 589 is the Topo IA-type catalytic domain; it reads NENEAKSVDA…AIKIFKLKFM (420 aa). The active-site O-(5'-phospho-DNA)-tyrosine intermediate is the Y332. Residues 371–391 are disordered; that stretch reads QTPRKGKDAGDHPPITPMKLG.

It belongs to the type IA topoisomerase family.

It catalyses the reaction ATP-independent breakage of single-stranded DNA, followed by passage and rejoining.. Releases the supercoiling and torsional tension of DNA introduced during the DNA replication and transcription by transiently cleaving and rejoining one strand of the DNA duplex. Introduces a single-strand break via transesterification at a target site in duplex DNA. The scissile phosphodiester is attacked by the catalytic tyrosine of the enzyme, resulting in the formation of a DNA-(5'-phosphotyrosyl)-enzyme intermediate and the expulsion of a 3'-OH DNA strand. The free DNA strand than undergoes passage around the unbroken strand thus removing DNA supercoils. Finally, in the religation step, the DNA 3'-OH attacks the covalent intermediate to expel the active-site tyrosine and restore the DNA phosphodiester backbone. Weakly relaxes negative supercoils and displays a distinct preference for binding single-stranded DNA. This is DNA topoisomerase 3-beta (Top3beta) from Drosophila melanogaster (Fruit fly).